Consider the following 403-residue polypeptide: Chorismate synthase (403 aa).

Positions 40 and 46 each coordinate NADP(+). FMN contacts are provided by residues Arg140–Ser142, Gln261–Ala262, Gly305, Lys320–Thr324, and Arg346.

It belongs to the chorismate synthase family. In terms of assembly, homotetramer. FMNH2 serves as cofactor.

It catalyses the reaction 5-O-(1-carboxyvinyl)-3-phosphoshikimate = chorismate + phosphate. The protein operates within metabolic intermediate biosynthesis; chorismate biosynthesis; chorismate from D-erythrose 4-phosphate and phosphoenolpyruvate: step 7/7. Its function is as follows. Catalyzes the anti-1,4-elimination of the C-3 phosphate and the C-6 proR hydrogen from 5-enolpyruvylshikimate-3-phosphate (EPSP) to yield chorismate, which is the branch point compound that serves as the starting substrate for the three terminal pathways of aromatic amino acid biosynthesis. This reaction introduces a second double bond into the aromatic ring system. This chain is Chorismate synthase, found in Corynebacterium diphtheriae (strain ATCC 700971 / NCTC 13129 / Biotype gravis).